The sequence spans 549 residues: Pleckstrin homology domain-containing family A member 8 (549 aa).

A PH domain is found at 1 to 93; it reads MEGVLYKWTN…WLVALGTAKA (93 aa). Disordered stretches follow at residues 180 to 245 and 257 to 312; these read NPDL…ENIS and QNDL…QEVQ. The segment covering 203–219 has biased composition (basic and acidic residues); that stretch reads KSNDPKNLHPGETRKDL. Positions 276–288 are enriched in acidic residues; that stretch reads EPVEEQQTDGSTE. Residues 299–309 show a composition bias toward polar residues; sequence EVSMSPTQNKQ.

The protein resides in the cytoplasm. It localises to the golgi apparatus. The protein localises to the trans-Golgi network membrane. Its subcellular location is the membrane. Cargo transport protein that is required for apical transport from the trans-Golgi network (TGN) to the plasma membrane. This chain is Pleckstrin homology domain-containing family A member 8 (plekha8), found in Danio rerio (Zebrafish).